A 105-amino-acid chain; its full sequence is Protein AlbB (105 aa).

Functionally, involved in the biosynthesis of albonoursin (cyclo[(alpha,beta-dehydro-Phe)-(alpha,beta-dehydro-Leu)]), an antibacterial peptide. AlbB is essential for cyclic dipeptide oxidase AlbA (CDO) activity. This chain is Protein AlbB (albB), found in Streptomyces noursei (Streptomyces albulus).